A 61-amino-acid polypeptide reads, in one-letter code: Conotoxin Bt5.1 (61 aa).

Residues 1–22 (MRGLPVFVILLLLIASEPSVDA) form the signal peptide. Positions 23–48 (RPKTKADVPLTSLNDNAKRTLQILRN) are excised as a propeptide.

The protein belongs to the conotoxin T superfamily. Post-translationally, contains 2 disulfide bonds that can be either 'C1-C3, C2-C4' or 'C1-C4, C2-C3', since these disulfide connectivities have been observed for conotoxins with cysteine framework V (for examples, see AC P0DQQ7 and AC P81755). Expressed by the venom duct.

The protein localises to the secreted. This chain is Conotoxin Bt5.1, found in Conus betulinus (Beech cone).